Reading from the N-terminus, the 125-residue chain is Profilin-A (125 aa).

Residue Ser-2 is modified to N-acetylserine.

The protein belongs to the profilin family. Occurs in many kinds of cells as a complex with monomeric actin in a 1:1 ratio.

The protein localises to the cytoplasm. It localises to the cytoskeleton. In terms of biological role, binds to actin and affects the structure of the cytoskeleton. At high concentrations, profilin prevents the polymerization of actin, whereas it enhances it at low concentrations. By binding to PIP2, it inhibits the formation of IP3 and DG. The polypeptide is Profilin-A (PROA) (Physarum polycephalum (Slime mold)).